Here is a 78-residue protein sequence, read N- to C-terminus: uncharacterized protein (78 aa).

Residues Met-1–Gln-78 form a disordered region. 2 stretches are compositionally biased toward basic and acidic residues: residues Ser-10–Ser-33 and Leu-63–Gln-78.

This is an uncharacterized protein from Schizosaccharomyces pombe (strain 972 / ATCC 24843) (Fission yeast).